We begin with the raw amino-acid sequence, 336 residues long: MTVSLEGLYRGESLTSEQTEQLFGELLRGEMDPIVLSSLLTAMKVKGESPSEIEGAARALIAAAKPFPRPDYEFCDIVGTGGDGLYTINISSTAAIVGATCGIKVAKHGNRSVSSKTGSSDLLEKLGIKLDMSPETARHCLDEANICFLFAPHYHSGMRFAAPVRQALKTRTIFNVLGPLINPARPTYQLMGVYSPDLLEPIAETLHALGLKKGMVAYGSGLDEIAVHGETQVAEINDGHIRYYTLTPTDFGLKYYPLESIQGGTPDENRKITETLLAGKGTDAQQAAIAINLAPLLKMGGLVDTLKQGAEMAIETLRSGDALDKVTQLATLSHKE.

5-phospho-alpha-D-ribose 1-diphosphate-binding positions include Gly-79, 82 to 83, Thr-87, 89 to 92, 107 to 115, and Ser-119; these read GD, NISS, and KHGNRSVSS. Residue Gly-79 participates in anthranilate binding. Ser-91 is a Mg(2+) binding site. Asn-110 contacts anthranilate. Arg-165 contacts anthranilate. 2 residues coordinate Mg(2+): Asp-223 and Glu-224.

Belongs to the anthranilate phosphoribosyltransferase family. Homodimer. It depends on Mg(2+) as a cofactor.

The catalysed reaction is N-(5-phospho-beta-D-ribosyl)anthranilate + diphosphate = 5-phospho-alpha-D-ribose 1-diphosphate + anthranilate. The protein operates within amino-acid biosynthesis; L-tryptophan biosynthesis; L-tryptophan from chorismate: step 2/5. Its function is as follows. Catalyzes the transfer of the phosphoribosyl group of 5-phosphorylribose-1-pyrophosphate (PRPP) to anthranilate to yield N-(5'-phosphoribosyl)-anthranilate (PRA). This is Anthranilate phosphoribosyltransferase from Tolumonas auensis (strain DSM 9187 / NBRC 110442 / TA 4).